The chain runs to 170 residues: Ribosome maturation factor RimP (170 aa).

The protein belongs to the RimP family.

Its subcellular location is the cytoplasm. Functionally, required for maturation of 30S ribosomal subunits. The polypeptide is Ribosome maturation factor RimP (Acidothermus cellulolyticus (strain ATCC 43068 / DSM 8971 / 11B)).